Reading from the N-terminus, the 602-residue chain is NADH-quinone oxidoreductase subunit C/D (602 aa).

The NADH dehydrogenase I subunit C stretch occupies residues 1-192; it reads MVNNMTDLTA…DPFELTKAKQ (192 aa). Positions 216-602 are NADH dehydrogenase I subunit D; sequence DFMFLNLGPN…IDFVMSDVDR (387 aa).

This sequence in the N-terminal section; belongs to the complex I 30 kDa subunit family. It in the C-terminal section; belongs to the complex I 49 kDa subunit family. In terms of assembly, NDH-1 is composed of 13 different subunits. Subunits NuoB, CD, E, F, and G constitute the peripheral sector of the complex.

Its subcellular location is the cell inner membrane. It catalyses the reaction a quinone + NADH + 5 H(+)(in) = a quinol + NAD(+) + 4 H(+)(out). Functionally, NDH-1 shuttles electrons from NADH, via FMN and iron-sulfur (Fe-S) centers, to quinones in the respiratory chain. The immediate electron acceptor for the enzyme in this species is believed to be ubiquinone. Couples the redox reaction to proton translocation (for every two electrons transferred, four hydrogen ions are translocated across the cytoplasmic membrane), and thus conserves the redox energy in a proton gradient. In Klebsiella pneumoniae (strain 342), this protein is NADH-quinone oxidoreductase subunit C/D.